The sequence spans 150 residues: Aspartate 1-decarboxylase (150 aa).

Ser24 (schiff-base intermediate with substrate; via pyruvic acid) is an active-site residue. Pyruvic acid (Ser) is present on Ser24. Residue Thr56 participates in substrate binding. Residue Tyr57 is the Proton donor of the active site. 72–74 (GAA) lines the substrate pocket.

It belongs to the PanD family. In terms of assembly, heterooctamer of four alpha and four beta subunits. It depends on pyruvate as a cofactor. Post-translationally, is synthesized initially as an inactive proenzyme, which is activated by self-cleavage at a specific serine bond to produce a beta-subunit with a hydroxyl group at its C-terminus and an alpha-subunit with a pyruvoyl group at its N-terminus.

The protein resides in the cytoplasm. The enzyme catalyses L-aspartate + H(+) = beta-alanine + CO2. It participates in cofactor biosynthesis; (R)-pantothenate biosynthesis; beta-alanine from L-aspartate: step 1/1. Its function is as follows. Catalyzes the pyruvoyl-dependent decarboxylation of aspartate to produce beta-alanine. The chain is Aspartate 1-decarboxylase from Xanthobacter autotrophicus (strain ATCC BAA-1158 / Py2).